The following is a 644-amino-acid chain: Macrolide export ATP-binding/permease protein MacB (644 aa).

The ABC transporter domain occupies 7–245 (IELQDITRSF…IPETDQNGRR (239 aa)). 43 to 50 (GPSGSGKS) is an ATP binding site. Helical transmembrane passes span 271–291 (ALTL…LAIG), 526–546 (IAAI…LVSV), 570–590 (FLTE…VIGI), and 607–627 (LLPM…FGFL).

Belongs to the ABC transporter superfamily. Macrolide exporter (TC 3.A.1.122) family. As to quaternary structure, homodimer. Part of the tripartite efflux system MacAB-TolC, which is composed of an inner membrane transporter, MacB, a periplasmic membrane fusion protein, MacA, and an outer membrane component, TolC. The complex forms a large protein conduit and can translocate molecules across both the inner and outer membranes. Interacts with MacA.

It is found in the cell inner membrane. Functionally, part of the tripartite efflux system MacAB-TolC. MacB is a non-canonical ABC transporter that contains transmembrane domains (TMD), which form a pore in the inner membrane, and an ATP-binding domain (NBD), which is responsible for energy generation. Confers resistance against macrolides. The polypeptide is Macrolide export ATP-binding/permease protein MacB (Marinobacter nauticus (strain ATCC 700491 / DSM 11845 / VT8) (Marinobacter aquaeolei)).